The primary structure comprises 652 residues: Tetracycline resistance protein TetP (652 aa).

Residues 2–252 enclose the tr-type G domain; the sequence is KKIINIGIVA…CSYFPFASND (251 aa). GTP contacts are provided by residues 11–18, 75–79, and 129–132; these read AHVDAGKT, DTPGH, and NKLD.

Belongs to the TRAFAC class translation factor GTPase superfamily. Classic translation factor GTPase family. TetM/TetO subfamily.

In terms of biological role, abolishes the inhibitory effect of tetracyclin on protein synthesis by a non-covalent modification of the ribosomes. In Clostridium perfringens, this protein is Tetracycline resistance protein TetP (tetP).